The sequence spans 629 residues: tRNA uridine 5-carboxymethylaminomethyl modification enzyme MnmG (629 aa).

FAD contacts are provided by residues 14-19, valine 126, and serine 181; that span reads GAGHAG. 273–287 provides a ligand contact to NAD(+); that stretch reads GPRYCPSIEDKVVRF. Residue glutamine 370 coordinates FAD.

Belongs to the MnmG family. In terms of assembly, homodimer. Heterotetramer of two MnmE and two MnmG subunits. Requires FAD as cofactor.

It is found in the cytoplasm. NAD-binding protein involved in the addition of a carboxymethylaminomethyl (cmnm) group at the wobble position (U34) of certain tRNAs, forming tRNA-cmnm(5)s(2)U34. This chain is tRNA uridine 5-carboxymethylaminomethyl modification enzyme MnmG, found in Bacillus cereus (strain ATCC 14579 / DSM 31 / CCUG 7414 / JCM 2152 / NBRC 15305 / NCIMB 9373 / NCTC 2599 / NRRL B-3711).